A 182-amino-acid polypeptide reads, in one-letter code: uncharacterized protein (182 aa).

This is an uncharacterized protein from Thermoproteus tenax (TTV1).